A 304-amino-acid polypeptide reads, in one-letter code: Acetyl-coenzyme A carboxylase carboxyl transferase subunit beta (304 aa).

A CoA carboxyltransferase N-terminal domain is found at 25 to 294 (VWTKCDSCGQ…PSVVESKADT (270 aa)). 4 residues coordinate Zn(2+): cysteine 29, cysteine 32, cysteine 48, and cysteine 51. Residues 29 to 51 (CDSCGQVLYRAELERNLEVCPKC) form a C4-type zinc finger.

Belongs to the AccD/PCCB family. As to quaternary structure, acetyl-CoA carboxylase is a heterohexamer composed of biotin carboxyl carrier protein (AccB), biotin carboxylase (AccC) and two subunits each of ACCase subunit alpha (AccA) and ACCase subunit beta (AccD). It depends on Zn(2+) as a cofactor.

The protein resides in the cytoplasm. The enzyme catalyses N(6)-carboxybiotinyl-L-lysyl-[protein] + acetyl-CoA = N(6)-biotinyl-L-lysyl-[protein] + malonyl-CoA. It participates in lipid metabolism; malonyl-CoA biosynthesis; malonyl-CoA from acetyl-CoA: step 1/1. Component of the acetyl coenzyme A carboxylase (ACC) complex. Biotin carboxylase (BC) catalyzes the carboxylation of biotin on its carrier protein (BCCP) and then the CO(2) group is transferred by the transcarboxylase to acetyl-CoA to form malonyl-CoA. This chain is Acetyl-coenzyme A carboxylase carboxyl transferase subunit beta, found in Yersinia pseudotuberculosis serotype O:1b (strain IP 31758).